Here is a 426-residue protein sequence, read N- to C-terminus: MINPWSSSDFFDYERLKREFGIGDMNVPFDHFLFRRHLILGQRSIDYIDYALKHHMKFNVMTGLMPSGEMHLGNKSAIDQVIFFQKLGGRVSIAVADLESYSTRGISLERAREVAIEKYILNYIAMGLEPCEIYFQSRNSDVQFLAYMLGNRTNMSELRSLYGFTDTHDLLHINAPLIQAADVLHTQMKKYGGPAPTVVPVGFDQDPHLRLMRDLAKRMRIFNIQLENDLVVSVRGKDDPKEYIDMAYEYLSSRYTNVKKDYEYRVVRADGVDQQDLVGIDLDLAHMETKYNDFAFIAPSATYQKLMKGLKGGKMSSSVPDSLISLNDDPKEARRKIMAGMTGGRDTEEEQRRLGGEPDRCPIFDLYNYEIDDDKHVKEVYDDCRNGKRMCGFCKREIADRMASWLSDLSKKREEAREKLSLYIHE.

Positions 66 to 74 (PSGEMHLGN) match the 'HIGH' region motif. The 'KMSKS' region signature appears at 314–318 (KMSSS).

This sequence belongs to the class-I aminoacyl-tRNA synthetase family.

The protein localises to the cytoplasm. The enzyme catalyses tRNA(Trp) + L-tryptophan + ATP = L-tryptophyl-tRNA(Trp) + AMP + diphosphate + H(+). The chain is Tryptophan--tRNA ligase from Thermoplasma acidophilum (strain ATCC 25905 / DSM 1728 / JCM 9062 / NBRC 15155 / AMRC-C165).